Consider the following 409-residue polypeptide: MSMMLSNWALSPRYVGQRNLIHCTTLFHTLTRWAKDADDKYHDINLMYENMFTPSNDNVSILQDEGKSDYDTTKTSSMQEDISAFNKDLYNFYNIGYAKQIMSASQLENIVKAKGRFVIQSLSTSPYYNLALENYVFKNTPRAKRGPDNCRLVFYINDRCAVIGKNQNLWQEVDLAKLKSKNFELLRRFSGGGTVLHDLGNVNYSYLTSREKFETKFFNKMIIKWLNSLNPELRLDLNERGDIIQDGFKISGSAYKIAGGKAYHHATMLLNADLEQFSGLLEPSLPNNMEWESSGVHSVKSKIKNVGIITPNQFIAVVSERFQKTFKVDGEIPIYYCDEFKSINDEIKDAMNTLQSEQWKYFSGPKFSVKIKDKGLTIKVEKGMIYDCDRNDLIGLEFKGFLENIDSYT.

One can recognise a BPL/LPL catalytic domain in the interval 146-330 (GPDNCRLVFY…RFQKTFKVDG (185 aa)). ATP contacts are provided by residues R188, 193 to 196 (GTVL), and K249. K249 provides a ligand contact to (R)-lipoate.

The protein belongs to the LplA family. Monomer.

It carries out the reaction L-lysyl-[lipoyl-carrier protein] + (R)-lipoate + ATP = N(6)-[(R)-lipoyl]-L-lysyl-[lipoyl-carrier protein] + AMP + diphosphate + H(+). The protein operates within protein modification; protein lipoylation via exogenous pathway; protein N(6)-(lipoyl)lysine from lipoate: step 1/2. It participates in protein modification; protein lipoylation via exogenous pathway; protein N(6)-(lipoyl)lysine from lipoate: step 2/2. In terms of biological role, catalyzes both the ATP-dependent activation of exogenously supplied lipoate to lipoyl-AMP and the transfer of the activated lipoyl onto the lipoyl domains of lipoate-dependent enzymes. This chain is Putative lipoate-protein ligase A (AIM22), found in Saccharomyces cerevisiae (strain YJM789) (Baker's yeast).